Reading from the N-terminus, the 106-residue chain is uncharacterized protein (106 aa).

This is an uncharacterized protein from Schizosaccharomyces pombe (strain 972 / ATCC 24843) (Fission yeast).